A 1152-amino-acid polypeptide reads, in one-letter code: Nucleolar protein 6 (1152 aa).

2 disordered regions span residues 1–30 and 36–55; these read MPSA…DPEV and EGMD…EPPA. Ser65 carries the post-translational modification Phosphoserine. The stretch at 92-128 forms a coiled coil; sequence LLRLQVEELLKEVRLSEKKKERIDNFLKEVTKRIQKV. 2 positions are modified to phosphoserine: Ser292 and Ser817.

It belongs to the NRAP family. Part of the small subunit (SSU) processome, composed of more than 70 proteins and the RNA chaperone small nucleolar RNA (snoRNA) U3. Interacts with RRP7A; required for NOL6 localization to nucleolus. Ubiquitously expressed.

The protein resides in the nucleus. The protein localises to the nucleolus. It localises to the chromosome. In terms of biological role, part of the small subunit (SSU) processome, first precursor of the small eukaryotic ribosomal subunit. During the assembly of the SSU processome in the nucleolus, many ribosome biogenesis factors, an RNA chaperone and ribosomal proteins associate with the nascent pre-rRNA and work in concert to generate RNA folding, modifications, rearrangements and cleavage as well as targeted degradation of pre-ribosomal RNA by the RNA exosome. The sequence is that of Nucleolar protein 6 (Nol6) from Mus musculus (Mouse).